Reading from the N-terminus, the 431-residue chain is Adenylosuccinate synthetase (431 aa).

GTP-binding positions include 12-18 and 40-42; these read GDEGKGK and GHT. Asp13 functions as the Proton acceptor in the catalytic mechanism. 2 residues coordinate Mg(2+): Asp13 and Gly40. IMP is bound by residues 13 to 16, 38 to 41, Thr129, Arg143, Gln224, Thr239, and Arg303; these read DEGK and NAGH. The active-site Proton donor is His41. 299–305 serves as a coordination point for substrate; sequence TVSNRQR. Residues Arg305, 331–333, and 413–415 contribute to the GTP site; these read KLD and STG.

The protein belongs to the adenylosuccinate synthetase family. In terms of assembly, homodimer. Requires Mg(2+) as cofactor.

It is found in the cytoplasm. It catalyses the reaction IMP + L-aspartate + GTP = N(6)-(1,2-dicarboxyethyl)-AMP + GDP + phosphate + 2 H(+). It functions in the pathway purine metabolism; AMP biosynthesis via de novo pathway; AMP from IMP: step 1/2. Functionally, plays an important role in the de novo pathway of purine nucleotide biosynthesis. Catalyzes the first committed step in the biosynthesis of AMP from IMP. This is Adenylosuccinate synthetase from Ehrlichia canis (strain Jake).